The primary structure comprises 186 residues: MAEVMLPRKMEILNHSSKFGSPDPLHVLAVDDSHVDRKFIERLLRVSSCKVTVVDSATRALQYLGLDVEEKSVGFEDLKVNLIMTDYSMPGMTGYELLKKIKESSAFREVPVVIMSSENILPRIDRCLEEGAEDFLLKPVKLSDVKRLRDSLMKVEDLSFTKSIQKRELETENVYPVHSQLKRAKI.

In terms of domain architecture, Response regulatory spans 26-153 (HVLAVDDSHV…DVKRLRDSLM (128 aa)). Asp-86 carries the post-translational modification 4-aspartylphosphate.

Belongs to the ARR family. Type-A subfamily. Post-translationally, two-component system major event consists of a His-to-Asp phosphorelay between a sensor histidine kinase (HK) and a response regulator (RR). In plants, the His-to-Asp phosphorelay involves an additional intermediate named Histidine-containing phosphotransfer protein (HPt). This multistep phosphorelay consists of a His-Asp-His-Asp sequential transfer of a phosphate group between first a His and an Asp of the HK protein, followed by the transfer to a conserved His of the HPt protein and finally the transfer to an Asp in the receiver domain of the RR protein. As to expression, predominantly expressed in roots.

It is found in the nucleus. Its function is as follows. Functions as a response regulator involved in His-to-Asp phosphorelay signal transduction system. Phosphorylation of the Asp residue in the receiver domain activates the ability of the protein to promote the transcription of target genes. Type-A response regulators seem to act as negative regulators of the cytokinin signaling. The protein is Two-component response regulator ARR6 (ARR6) of Arabidopsis thaliana (Mouse-ear cress).